A 429-amino-acid chain; its full sequence is Lysine-specific demethylase JMJ30 (429 aa).

The 158-residue stretch at 272–429 (SSPMEPTYLA…WSNEAESSSS (158 aa)) folds into the JmjC domain. H326, D328, and H405 together coordinate Fe cation.

The protein belongs to the JARID1 histone demethylase family. As to quaternary structure, interacts with EFM. Binds to ATXR2, ARF7 and ARF19. Fe(2+) serves as cofactor. In terms of tissue distribution, expressed ubiquitously in vasculatures, roots, rosette leaves, stems, inflorescences and siliques. Mainly present in the root meristem and root differentiation area. Observed at high level in callus.

It localises to the nucleus. The protein resides in the cytoplasm. It is found in the endoplasmic reticulum. The enzyme catalyses N(6),N(6),N(6)-trimethyl-L-lysyl(36)-[histone H3] + 2 2-oxoglutarate + 2 O2 = N(6)-methyl-L-lysyl(36)-[histone H3] + 2 formaldehyde + 2 succinate + 2 CO2. The catalysed reaction is N(6),N(6),N(6)-trimethyl-L-lysyl(27)-[histone H3] + 2 2-oxoglutarate + 2 O2 = N(6)-methyl-L-lysyl(27)-[histone H3] + 2 formaldehyde + 2 succinate + 2 CO2. It carries out the reaction N(6),N(6)-dimethyl-L-lysyl(36)-[histone H3] + 2 2-oxoglutarate + 2 O2 = L-lysyl(36)-[histone H3] + 2 formaldehyde + 2 succinate + 2 CO2. In terms of biological role, histone demethylase that demethylates 'Lys-36' (H3K36me) of histone H3 with a specific activity for H3K36me3 and H3K36me2. Also active on 'Lys-27' (H3K27me) of histone H3 with a specific activity for H3K27me3 and H3K27me2. No activity on H3K36me1 and H3K27me1. Involved in the control of flowering time by demethylating H3K36me2 at the FT locus and repressing its expression. Acts within the central clock and contributes, in parallel with LUX, to temperature compensation, probably as a component of the evening complex, to maintain circadian period at increasing temperatures; this mechanism involves binding to and regulation of CCA1 and PRR7 promoters. Works in concert with TOC1 to promote the morning-phased clock genes CCA1 and LHY which function as components of the central oscillator. Together with JMJ32, regulates the flowering-repressor FLOWERING LOCUS C (FLC) locus by removing the repressive histone modification H3 lysine 27 trimethylation (H3K27me3), especially at elevated temperatures (e.g. 29 degrees Celsius), thus preventing extreme precocious flowering. JMJ30 and JMJ32 are regulators involved in the integration of abscisic acid (ABA) and brassinosteroids (BR) signaling pathways. Together with JMJ32, controls ABA-mediated growth arrest during the post-germination stage in unfavorable conditions, and responses to ABA during root development, via the removal of repressive histone mark (H3K27me3) from the SnRK2.8 promoter, thus promoting SnRK2.8 expression and subsequent kinase-dependent ABI3 activation. In addition, removes the repressive histone marks (H3K27me3) from the BZR1 locus in response to stress and ABA, thus activating the BR signaling pathway which, in turn, inhibits the ABA signaling pathway. Able to drive tissue identity changes to promote callus formation form somatic cells via a massive genome-wide chromatin remodeling (e.g. H3K9me3 demethylation) leading to the induction of Lateral organ Boundaries-Domain (LBD) genes (e.g. LBD16 and LBD29) that establish root primordia; when in complex with ARF proteins (e.g. ARF7 and ARF19), recruits ATXR2 which promotes the deposition of H3K36me3 at LBD genes promoters, thus ensuring their stable activation during callus formation. This Arabidopsis thaliana (Mouse-ear cress) protein is Lysine-specific demethylase JMJ30.